The following is a 174-amino-acid chain: Peptide methionine sulfoxide reductase MsrA (174 aa).

Residue Cys10 is part of the active site.

Belongs to the MsrA Met sulfoxide reductase family.

It catalyses the reaction L-methionyl-[protein] + [thioredoxin]-disulfide + H2O = L-methionyl-(S)-S-oxide-[protein] + [thioredoxin]-dithiol. The catalysed reaction is [thioredoxin]-disulfide + L-methionine + H2O = L-methionine (S)-S-oxide + [thioredoxin]-dithiol. Its function is as follows. Has an important function as a repair enzyme for proteins that have been inactivated by oxidation. Catalyzes the reversible oxidation-reduction of methionine sulfoxide in proteins to methionine. This is Peptide methionine sulfoxide reductase MsrA from Paenarthrobacter aurescens (strain TC1).